A 61-amino-acid polypeptide reads, in one-letter code: Small ribosomal subunit protein uS14 (61 aa).

The Zn(2+) site is built by C24, C27, C40, and C43.

The protein belongs to the universal ribosomal protein uS14 family. Zinc-binding uS14 subfamily. As to quaternary structure, part of the 30S ribosomal subunit. Contacts proteins S3 and S10. Zn(2+) is required as a cofactor.

Its function is as follows. Binds 16S rRNA, required for the assembly of 30S particles and may also be responsible for determining the conformation of the 16S rRNA at the A site. This chain is Small ribosomal subunit protein uS14, found in Malacoplasma penetrans (strain HF-2) (Mycoplasma penetrans).